Reading from the N-terminus, the 493-residue chain is C2H2-type transcription factor ffmA (493 aa).

The segment covering 1 to 18 (MPMPQYTMQPQYPVSQPH) has biased composition (low complexity). Disordered regions lie at residues 1 to 50 (MPMP…SRYP), 68 to 140 (TTVG…YPDG), and 164 to 202 (EPPR…KNTT). 2 stretches are compositionally biased toward polar residues: residues 69 to 79 (TVGSLPPSTFL) and 192 to 202 (NGVNGTAKNTT). The segment at 212 to 234 (FPCPHCNKTYLHAKHLKRHLLRH) adopts a C2H2-type 1 zinc-finger fold. The segment at 240–265 (YMCVLCKDTFSRSDILKRHFQKCSIR) adopts a C2H2-type 2; degenerate zinc-finger fold. Composition is skewed to polar residues over residues 288 to 307 (QAAA…TVPP) and 484 to 493 (ASTTLGGDGK). Disordered regions lie at residues 288 to 316 (QAAA…GATF) and 468 to 493 (TTTA…GDGK).

This sequence belongs to the krueppel C2H2-type zinc-finger protein family.

It localises to the nucleus. Functionally, transcription factor that acts in coordination with atrR to regulate the expression of the ABC-type multidrug transporter abcG1 and thus plays a role in azole susceptibility. Regulates the expression of genes involved in fermentation. Is able to promote expression from the yeast FLO11 promoter. In Aspergillus fumigatus (strain CBS 144.89 / FGSC A1163 / CEA10) (Neosartorya fumigata), this protein is C2H2-type transcription factor ffmA.